The following is a 75-amino-acid chain: Small ribosomal subunit protein bS18c (75 aa).

Belongs to the bacterial ribosomal protein bS18 family. Part of the 30S ribosomal subunit.

It is found in the plastid. The protein resides in the chloroplast. The chain is Small ribosomal subunit protein bS18c (rps18) from Marchantia polymorpha (Common liverwort).